We begin with the raw amino-acid sequence, 349 residues long: S-adenosylmethionine:tRNA ribosyltransferase-isomerase (349 aa).

The protein belongs to the QueA family. In terms of assembly, monomer.

Its subcellular location is the cytoplasm. It carries out the reaction 7-aminomethyl-7-carbaguanosine(34) in tRNA + S-adenosyl-L-methionine = epoxyqueuosine(34) in tRNA + adenine + L-methionine + 2 H(+). Its pathway is tRNA modification; tRNA-queuosine biosynthesis. Functionally, transfers and isomerizes the ribose moiety from AdoMet to the 7-aminomethyl group of 7-deazaguanine (preQ1-tRNA) to give epoxyqueuosine (oQ-tRNA). The polypeptide is S-adenosylmethionine:tRNA ribosyltransferase-isomerase (Flavobacterium psychrophilum (strain ATCC 49511 / DSM 21280 / CIP 103535 / JIP02/86)).